The following is a 362-amino-acid chain: Ferrochelatase (362 aa).

Residues histidine 212 and glutamate 294 each contribute to the Fe cation site.

Belongs to the ferrochelatase family.

Its subcellular location is the cytoplasm. The enzyme catalyses heme b + 2 H(+) = protoporphyrin IX + Fe(2+). It functions in the pathway porphyrin-containing compound metabolism; protoheme biosynthesis; protoheme from protoporphyrin-IX: step 1/1. Functionally, catalyzes the ferrous insertion into protoporphyrin IX. The polypeptide is Ferrochelatase (Leptospira biflexa serovar Patoc (strain Patoc 1 / Ames)).